Reading from the N-terminus, the 126-residue chain is Holo-[acyl-carrier-protein] synthase (126 aa).

Mg(2+)-binding residues include aspartate 9 and glutamate 58.

It belongs to the P-Pant transferase superfamily. AcpS family. Requires Mg(2+) as cofactor.

The protein resides in the cytoplasm. The enzyme catalyses apo-[ACP] + CoA = holo-[ACP] + adenosine 3',5'-bisphosphate + H(+). Functionally, transfers the 4'-phosphopantetheine moiety from coenzyme A to a Ser of acyl-carrier-protein. The polypeptide is Holo-[acyl-carrier-protein] synthase (Yersinia pestis bv. Antiqua (strain Angola)).